Here is a 100-residue protein sequence, read N- to C-terminus: NADH-quinone oxidoreductase subunit K (100 aa).

The next 3 helical transmembrane spans lie at 4-24 (LQHG…GLLI), 28-48 (LLFM…AFVV), and 60-80 (VMYI…LALL).

This sequence belongs to the complex I subunit 4L family. As to quaternary structure, NDH-1 is composed of 13 different subunits. Subunits NuoA, H, J, K, L, M, N constitute the membrane sector of the complex.

Its subcellular location is the cell inner membrane. It carries out the reaction a quinone + NADH + 5 H(+)(in) = a quinol + NAD(+) + 4 H(+)(out). Its function is as follows. NDH-1 shuttles electrons from NADH, via FMN and iron-sulfur (Fe-S) centers, to quinones in the respiratory chain. The immediate electron acceptor for the enzyme in this species is believed to be ubiquinone. Couples the redox reaction to proton translocation (for every two electrons transferred, four hydrogen ions are translocated across the cytoplasmic membrane), and thus conserves the redox energy in a proton gradient. The polypeptide is NADH-quinone oxidoreductase subunit K (Pectobacterium carotovorum subsp. carotovorum (strain PC1)).